The following is a 387-amino-acid chain: MEQVVIVDAIRTPMGRSKGGAFRNVRAEDLSAHLMRSLLARNPALEAAALDDIYWGCVQQTLEQGFNIARNAALLAEVPHSVPAVTVNRLCGSSMQALHDAARMIMTGDAQACLVGGVEHMGHVPMSHGVDFHPGLSRNVAKAAGMMGLTAEMLARMHGISREMQDAFAARSHARAWAATQSAAFKNEIIPTGGHDADGVLKQFNYDEVIRPETTVEALATLRPAFDPVNGTVTAGTSSALSDGAAAMLVMSESRAHELGLKPRARVRSMAVVGCDPSIMGYGPVPASKLALKKAGLSASDIGVFEMNEAFAAQILPCIKDLGLMEQIDEKINLNGGAIALGHPLGCSGARISTTLLNLMERKDVQFGLATMCIGLGQGIATVFERV.

The active-site Acyl-thioester intermediate is Cys-91. Active-site proton acceptor residues include His-343 and Cys-373.

This sequence belongs to the thiolase-like superfamily. Thiolase family. In terms of assembly, heterotetramer of two alpha chains (FadB) and two beta chains (FadA).

The protein resides in the cytoplasm. The enzyme catalyses an acyl-CoA + acetyl-CoA = a 3-oxoacyl-CoA + CoA. It functions in the pathway lipid metabolism; fatty acid beta-oxidation. In terms of biological role, catalyzes the final step of fatty acid oxidation in which acetyl-CoA is released and the CoA ester of a fatty acid two carbons shorter is formed. The sequence is that of 3-ketoacyl-CoA thiolase from Escherichia coli O9:H4 (strain HS).